We begin with the raw amino-acid sequence, 85 residues long: Mitochondrial protein pet191 homolog (85 aa).

Residues 18–61 (HSDCMFVKKKSARECLKNKDELPEECKNLIEAYGECKRQMLDMT) form the CHCH domain. The Cx10C motif motif lies at 21 to 32 (CMFVKKKSAREC). 2 disulfide bridges follow: C21-C53 and C32-C43. Positions 43 to 53 (CKNLIEAYGEC) match the Cx9C motif motif. Residues 65-85 (RIAPEKNTDQDTEKPSNVDEQ) are disordered.

It belongs to the PET191 family.

The protein localises to the mitochondrion. Involved in the assembly of cytochrome c oxidase. The sequence is that of Mitochondrial protein pet191 homolog from Schizosaccharomyces pombe (strain 972 / ATCC 24843) (Fission yeast).